A 487-amino-acid chain; its full sequence is UDP-glucose flavonoid 3-O-glucosyltransferase 7 (487 aa).

Histidine 23 acts as the Proton acceptor in catalysis. Histidine 23 is a binding site for an anthocyanidin. Aspartate 121 serves as the catalytic Charge relay. UDP-alpha-D-glucose-binding residues include alanine 345, glutamine 347, histidine 362, tryptophan 365, asparagine 366, serine 367, and glutamate 370. An an anthocyanidin-binding site is contributed by glycine 385. Glutamate 386 and glutamine 387 together coordinate UDP-alpha-D-glucose.

This sequence belongs to the UDP-glycosyltransferase family. As to expression, strongly expressed in achenes and receptacles.

The enzyme catalyses a flavonol + UDP-alpha-D-glucose = a flavonol 3-O-beta-D-glucoside + UDP + H(+). Its function is as follows. Broad spectrum multifunctional glucosyltransferase. Catalyzes the formation of flavonol 3-O- and 4'-O-glucosides during fruit ripening. Accepted substrates include several flavonoids, hydroxycoumarins and beta-naphthols. Uses UDP-Glc as a sugar donor, but not UDP-Gal or UDP-GlcUA. May also be involved in detoxification of xenobiotics. This is UDP-glucose flavonoid 3-O-glucosyltransferase 7 from Fragaria ananassa (Strawberry).